The primary structure comprises 158 residues: Rhombotin-2 (158 aa).

2 LIM zinc-binding domains span residues 28-90 (LTCG…LFGQ) and 92-154 (GLCA…WTKL).

As to expression, expression becomes restricted to the ventral blood island (VBI) as the embryo develops. In late neurula and early tailbud embryos, also expressed in the dorsal lateral plate (DLP), the site of definitive hematopoiesis in the tadpole. Expression in the DLP diminishes during tailbud stages. Expressed in circulating blood cells of tadpoles. Also expressed in non-hematopoietic sites, including the tailbud region and the central nervous system of early neurula embryos.

Its subcellular location is the nucleus. Functionally, transcription factor that acts synergistically with tal1/scl and gata1 to specify embryonic dorsal mesoderm to a hematopoietic fate. Induces globin gene expression together with fgf. The sequence is that of Rhombotin-2 from Xenopus laevis (African clawed frog).